Reading from the N-terminus, the 350-residue chain is MSPQEALTRLIEHREIFHDEMLSLMRQIMRGELSPTLISAIITGLRVKKETVGEIAAAAQVMREFAAPVQVEDDRLVDTCGTGGDSAHTFNISTTAAFVAAAAGARVAKHGGRSVSSKSGSADVLEALGVNLDQTPAQIAENIREIGLGFMFAPNFHSAMKHAASVRRELGVRTLFNILGPLTNPAGAKNQLLGVFHPDLVGIVTRVLHRLGSRHVMVVHGCTGNQGGLDEITIAGETLVGELRHGQILEYTIRPEDFGMKAARIETIQAHDTAQSAEMLRAILNNQPGPPRDIVLLNAGATIYVAGIAESLAQGVKKAHAAIESGAARKKLQELVEFSNRQNRGEVSLV.

5-phospho-alpha-D-ribose 1-diphosphate-binding positions include Gly-81, 84–85 (GD), Thr-89, 91–94 (NIST), 109–117 (KHGGRSVSS), and Ser-121. An anthranilate-binding site is contributed by Gly-81. Position 93 (Ser-93) interacts with Mg(2+). Position 167 (Arg-167) interacts with anthranilate. Positions 230 and 231 each coordinate Mg(2+).

Belongs to the anthranilate phosphoribosyltransferase family. In terms of assembly, homodimer. Requires Mg(2+) as cofactor.

The enzyme catalyses N-(5-phospho-beta-D-ribosyl)anthranilate + diphosphate = 5-phospho-alpha-D-ribose 1-diphosphate + anthranilate. It participates in amino-acid biosynthesis; L-tryptophan biosynthesis; L-tryptophan from chorismate: step 2/5. In terms of biological role, catalyzes the transfer of the phosphoribosyl group of 5-phosphorylribose-1-pyrophosphate (PRPP) to anthranilate to yield N-(5'-phosphoribosyl)-anthranilate (PRA). This is Anthranilate phosphoribosyltransferase from Nitrosospira multiformis (strain ATCC 25196 / NCIMB 11849 / C 71).